Reading from the N-terminus, the 1270-residue chain is ATP-dependent helicase/nuclease subunit A (1270 aa).

A UvrD-like helicase ATP-binding domain is found at 3–476 (TKWTEEQELA…IMLYKNFRSR (474 aa)). 24 to 31 (AAAGSGKT) is a binding site for ATP. One can recognise a UvrD-like helicase C-terminal domain in the interval 528 to 823 (IENLKVAGDI…RIMSIHKSKG (296 aa)).

The protein belongs to the helicase family. AddA subfamily. In terms of assembly, heterodimer of AddA and AddB/RexB. Mg(2+) is required as a cofactor.

The enzyme catalyses Couples ATP hydrolysis with the unwinding of duplex DNA by translocating in the 3'-5' direction.. The catalysed reaction is ATP + H2O = ADP + phosphate + H(+). Functionally, the heterodimer acts as both an ATP-dependent DNA helicase and an ATP-dependent, dual-direction single-stranded exonuclease. Recognizes the chi site generating a DNA molecule suitable for the initiation of homologous recombination. The AddA nuclease domain is required for chi fragment generation; this subunit has the helicase and 3' -&gt; 5' nuclease activities. The sequence is that of ATP-dependent helicase/nuclease subunit A from Clostridium perfringens (strain SM101 / Type A).